A 162-amino-acid polypeptide reads, in one-letter code: Probable chemoreceptor glutamine deamidase CheD 2 (162 aa).

The protein belongs to the CheD family.

It carries out the reaction L-glutaminyl-[protein] + H2O = L-glutamyl-[protein] + NH4(+). Functionally, probably deamidates glutamine residues to glutamate on methyl-accepting chemotaxis receptors (MCPs), playing an important role in chemotaxis. The protein is Probable chemoreceptor glutamine deamidase CheD 2 of Geobacter metallireducens (strain ATCC 53774 / DSM 7210 / GS-15).